We begin with the raw amino-acid sequence, 532 residues long: MLDASISPVVLVILDGWGYRNATEGNAIRTAETPIMDALWEAYPSTLIHTSGKDVGLPDGQMGNSEVGHLNLGAGRIVPQELVRITDAVEDGSILENPALLQACSAVRQHGSKLHLIGLCSDGGVHAHLDHLGGLLKLAAAQGIQDVYIHAITDGRDTNPTEGVNCITKIERLIATAGVGQIVTICGRYFAMDRDRRWDRVRKAYELLTIDGEGCGQTATEVLQETYAKGVSDEFVEPTRLAPGAIAPGDGVIFFNFRPDRARQLTYAFVEAEFEGFERDLIQPLTFVTFTQYDANLNVPVAFEPQNLTNILGEVVANHGLRQFRTAETEKYPHVTYFFNGGIEEPFPGEDRELIPSPMVATYDRAPKMSAQAVTDAAIAAIDKGIYSLVVINYANPDMVGHTGKMGATVEAIETVDRCLGRLVSAINRAGGTALITADHGNAEYMWDENGEPWTAHTTNLVPFIVVEGERRKLPGFGTEIPLREDGRLSDIAPTILQLLGLPQPVEMTGRSMIEPAAYEVKQGRTPVKVGV.

Mn(2+) contacts are provided by Asp15 and Ser65. The active-site Phosphoserine intermediate is the Ser65. Substrate is bound by residues His126, 156–157 (RD), Arg188, Arg194, 258–261 (RPDR), and Lys331. Mn(2+) is bound by residues Asp398, His402, Asp439, His440, and His457.

This sequence belongs to the BPG-independent phosphoglycerate mutase family. As to quaternary structure, monomer. The cofactor is Mn(2+).

The enzyme catalyses (2R)-2-phosphoglycerate = (2R)-3-phosphoglycerate. Its pathway is carbohydrate degradation; glycolysis; pyruvate from D-glyceraldehyde 3-phosphate: step 3/5. Functionally, catalyzes the interconversion of 2-phosphoglycerate and 3-phosphoglycerate. In Synechococcus elongatus (strain ATCC 33912 / PCC 7942 / FACHB-805) (Anacystis nidulans R2), this protein is 2,3-bisphosphoglycerate-independent phosphoglycerate mutase.